Here is a 141-residue protein sequence, read N- to C-terminus: Putative antiporter subunit mnhB2 (141 aa).

A run of 4 helical transmembrane segments spans residues 10-30 (TVTKIVVFILLTFGFYVFFAG), 35-55 (GGGFIGGLIFSSAFILMFLAF), 70-90 (KLMIVGAIISALTAIVPVFFG), and 116-136 (LFELGILLTVVGVIVTIMLAL).

Belongs to the CPA3 antiporters (TC 2.A.63) subunit B family. In terms of assembly, may form a heterooligomeric complex that consists of seven subunits: mnhA2, mnhB2, mnhC2, mnhD2, mnhE2, mnhF2 and mnhG2.

Its subcellular location is the cell membrane. The chain is Putative antiporter subunit mnhB2 (mnhB2) from Staphylococcus haemolyticus (strain JCSC1435).